Reading from the N-terminus, the 193-residue chain is NAD(P)H-quinone oxidoreductase subunit I (193 aa).

2 4Fe-4S ferredoxin-type domains span residues 56 to 85 (GRIHFEFDKCIACEVCVRVCPINLPVVDWE) and 96 to 125 (KHYSIDFGVCIFCGNCVEYCPTNCLSMTEE). [4Fe-4S] cluster-binding residues include Cys-65, Cys-68, Cys-71, Cys-75, Cys-105, Cys-108, Cys-111, and Cys-115. Positions 174 to 193 (NLPKGSQRAGQHPEDLVKAE) are disordered. A compositionally biased stretch (basic and acidic residues) spans 184–193 (QHPEDLVKAE).

It belongs to the complex I 23 kDa subunit family. As to quaternary structure, NDH-1 is composed of at least 11 different subunits. Requires [4Fe-4S] cluster as cofactor.

It is found in the cellular thylakoid membrane. The catalysed reaction is a plastoquinone + NADH + (n+1) H(+)(in) = a plastoquinol + NAD(+) + n H(+)(out). It catalyses the reaction a plastoquinone + NADPH + (n+1) H(+)(in) = a plastoquinol + NADP(+) + n H(+)(out). Functionally, NDH-1 shuttles electrons from an unknown electron donor, via FMN and iron-sulfur (Fe-S) centers, to quinones in the respiratory and/or the photosynthetic chain. The immediate electron acceptor for the enzyme in this species is believed to be plastoquinone. Couples the redox reaction to proton translocation, and thus conserves the redox energy in a proton gradient. The polypeptide is NAD(P)H-quinone oxidoreductase subunit I (Synechocystis sp. (strain ATCC 27184 / PCC 6803 / Kazusa)).